The sequence spans 331 residues: Cilia- and flagella-associated protein 119 (331 aa).

Phosphoserine is present on Ser-34. Disordered regions lie at residues 236–271 and 309–331; these read LWPESETEKEESKEMEEQAVTPQKEELETVAPPEPE and SSKLTALERPFQLPPGKGKSKTK. The stretch at 286-317 forms a coiled coil; sequence VNKELEQLQGLVEERLKASEERLSSKLTALER.

Its subcellular location is the cell projection. It is found in the cilium. It localises to the flagellum. The protein resides in the cytoplasmic vesicle. The protein localises to the secretory vesicle. Its subcellular location is the acrosome. It is found in the cytoplasm. The sequence is that of Cilia- and flagella-associated protein 119 from Homo sapiens (Human).